A 192-amino-acid chain; its full sequence is Potassium channel HX13_20290 (192 aa).

The helical transmembrane segment at 1–24 (MTKGRLEAFSDGVLAIIITIMVLE) threads the bilayer. Residues 5–11 (RLEAFSD) carry the RxxxFSD motif motif. Leucine 25 is a topological domain (cytoplasmic). Residues 26–29 (KVPE) form a short helix H1 region. Residues 26 to 39 (KVPEGSSWASLQPI) lie on the Extracellular side of the membrane. The short helix H2 stretch occupies residues 31-37 (SSWASLQ). The helical transmembrane segment at 40–65 (LPRFLAYIFSFIYVGIYWNNHHHLFQ) threads the bilayer. At 66–71 (TVKKVN) the chain is on the cytoplasmic side. The chain crosses the membrane as a helical span at residues 72 to 93 (GSILWANLHLLFWLSLMPIATE). Residues 94 to 101 (WIGTSHFA) lie on the Extracellular side of the membrane. Residues 102 to 126 (QNPVATYGIGLIMSAIAYTILENVI) traverse the membrane as a helical segment. Over 127 to 133 (IRCEGEN) the chain is Cytoplasmic. A helical membrane pass occupies residues 134–162 (SKLKEAIHSKFKEYISIIFYVLGIATSFF). Over 163–164 (YP) the chain is Extracellular. The chain crosses the membrane as a helical span at residues 165-180 (YIAIGFYYLVALIWLI). Residues 181 to 192 (PDKRIEKSLKEN) lie on the Cytoplasmic side of the membrane.

Belongs to the TMEM175 family. Homotetramer.

Its subcellular location is the membrane. The enzyme catalyses K(+)(in) = K(+)(out). Potassium channel. The polypeptide is Potassium channel HX13_20290 (Chryseobacterium sp. (strain P1-3)).